We begin with the raw amino-acid sequence, 190 residues long: dTTP/UTP pyrophosphatase (190 aa).

The active-site Proton acceptor is Asp-68.

This sequence belongs to the Maf family. YhdE subfamily. The cofactor is a divalent metal cation.

The protein localises to the cytoplasm. It carries out the reaction dTTP + H2O = dTMP + diphosphate + H(+). The enzyme catalyses UTP + H2O = UMP + diphosphate + H(+). Its function is as follows. Nucleoside triphosphate pyrophosphatase that hydrolyzes dTTP and UTP. May have a dual role in cell division arrest and in preventing the incorporation of modified nucleotides into cellular nucleic acids. This Pyrococcus furiosus (strain ATCC 43587 / DSM 3638 / JCM 8422 / Vc1) protein is dTTP/UTP pyrophosphatase.